We begin with the raw amino-acid sequence, 319 residues long: MLSLQTLAKKALAKQSVPEEYHYILKYCGLWWQNKPIHLCDYCNYVIVNSTPFKGELHLDVALIMAIKENNHDLIRLFTEWGANIYYGLSCARTEYTQELCRKLGAKDGLDKKDIFISLLHHKTSNNIILCHEIFNKNPMLEILNMQDFGEEIHRELKHLIFYILDNVPINTLNKYWYAIAVKYKLKRAISFFYQTYDHLNMWRLMCAISFNNVFDLHEIYEQKIVHMDIDKMMHLACMEDDNFLTIYYCFVLGADIDQAINVTLWHHQTNNLCFCKDLKDLKEQNGLTARPLLLPNITDPKKIYTMLKNYLPISSNSR.

The protein belongs to the asfivirus MGF 360 family.

Its function is as follows. Plays a role in virus cell tropism, and may be required for efficient virus replication in macrophages. This chain is Protein MGF 360-8L, found in Ornithodoros (relapsing fever ticks).